We begin with the raw amino-acid sequence, 201 residues long: NAD(P)H dehydrogenase (quinone) (201 aa).

Residues 7–192 (ILVLYYSMYG…SIARYQGEYV (186 aa)) enclose the Flavodoxin-like domain. FMN contacts are provided by residues 13–18 (SMYGHI) and 81–83 (TRF). NAD(+) is bound at residue Y15. W101 serves as a coordination point for substrate. FMN-binding positions include 116-121 (STGTGG) and H136.

The protein belongs to the WrbA family. The cofactor is FMN.

The catalysed reaction is a quinone + NADH + H(+) = a quinol + NAD(+). The enzyme catalyses a quinone + NADPH + H(+) = a quinol + NADP(+). The polypeptide is NAD(P)H dehydrogenase (quinone) (Shigella sonnei (strain Ss046)).